The sequence spans 932 residues: Protein translocase subunit SecA, chloroplastic (932 aa).

95-102 (MRTGEGKT) is a binding site for ATP. Over residues 632-641 (HESRRVDNQL) the composition is skewed to basic and acidic residues. Residues 632–653 (HESRRVDNQLRGRSGRQGDPGS) are disordered.

It belongs to the SecA family.

The protein resides in the plastid. It is found in the chloroplast stroma. The protein localises to the chloroplast thylakoid membrane. The catalysed reaction is ATP + H2O + chloroplast-proteinSide 1 = ADP + phosphate + chloroplast-proteinSide 2.. Its function is as follows. Has a central role in coupling the hydrolysis of ATP to the transfer of proteins across the thylakoid membrane. This is Protein translocase subunit SecA, chloroplastic from Ostreococcus lucimarinus (strain CCE9901).